The chain runs to 255 residues: NAD kinase (255 aa).

The active-site Proton acceptor is the aspartate 44. NAD(+) contacts are provided by residues aspartate 44–glycine 45, histidine 49, asparagine 114–glutamate 115, aspartate 144, alanine 152, serine 155–serine 160, and glutamine 216.

Belongs to the NAD kinase family. A divalent metal cation is required as a cofactor.

It is found in the cytoplasm. The catalysed reaction is NAD(+) + ATP = ADP + NADP(+) + H(+). Its function is as follows. Involved in the regulation of the intracellular balance of NAD and NADP, and is a key enzyme in the biosynthesis of NADP. Catalyzes specifically the phosphorylation on 2'-hydroxyl of the adenosine moiety of NAD to yield NADP. This Rickettsia felis (strain ATCC VR-1525 / URRWXCal2) (Rickettsia azadi) protein is NAD kinase.